Consider the following 164-residue polypeptide: Thiol peroxidase (164 aa).

The 146-residue stretch at 18 to 163 (VNEGDIAPNF…FEAALKAYRN (146 aa)) folds into the Thioredoxin domain. C60 functions as the Cysteine sulfenic acid (-SOH) intermediate in the catalytic mechanism. C60 and C93 form a disulfide bridge.

This sequence belongs to the peroxiredoxin family. Tpx subfamily. In terms of assembly, homodimer.

It catalyses the reaction a hydroperoxide + [thioredoxin]-dithiol = an alcohol + [thioredoxin]-disulfide + H2O. Its function is as follows. Thiol-specific peroxidase that catalyzes the reduction of hydrogen peroxide and organic hydroperoxides to water and alcohols, respectively. Plays a role in cell protection against oxidative stress by detoxifying peroxides. The sequence is that of Thiol peroxidase from Staphylococcus epidermidis (strain ATCC 35984 / DSM 28319 / BCRC 17069 / CCUG 31568 / BM 3577 / RP62A).